The chain runs to 413 residues: MIAEIISIGTELLHGDIVDTNSAYLAEKLTGCGIDVHYISTVGDNKQRLYKTLQQAVERADLIITTGGLGPTMDDLTREAISEITTCPLVMRPDLVIDIEGYFNHKRTTMTPNNLKQSYLPEGAIPINNPVGTAPGILLEKDNYIIISLPGVPREMKIMFEESVLPYIKKKNNLMIISKELHFIGIGESTLETKLEDIMDSMNPSLALLAGDGEVKLKITGKGRTKKKIENKISEIVKTVRNRVGEYIYGEDETSLPDEIGKLLSKRGVTIALAESCTGGLIGARITDIPGSSAYFKGGVIAYSNEVKINHLGVNKNTINKEGAVSPETAAEMASGVRQRLEADIGLSVTGIAGPEGGTDEKPVGLVYVGLAGIDGEVKTYKLNFKGDRNKNRWLTTQSAFYYLYRYLKFSFK.

The protein belongs to the CinA family.

The chain is Putative competence-damage inducible protein from Halothermothrix orenii (strain H 168 / OCM 544 / DSM 9562).